The sequence spans 153 residues: ORM1-like protein 1 (153 aa).

Residues 1-26 (MNVGVAHSEVNPNTRVMNSRGMWLTY) lie on the Cytoplasmic side of the membrane. Helical transmembrane passes span 27–46 (ALGVGLLHIVLLSIPFFSVP) and 47–64 (VAWTLTNIIHNLGMYVFL). The Cytoplasmic portion of the chain corresponds to 65 to 100 (HAVKGTPFETPDQGKARLLTHWEQLDYGVQFTSSRK). A helical transmembrane segment spans residues 101–121 (FFTISPIILYFLASFYTKYDP). Residues 122-123 (TH) are Extracellular-facing. A helical transmembrane segment spans residues 124 to 140 (FILNTASLLSVLIPKMP). The Cytoplasmic segment spans residues 141–153 (QLHGVRIFGINKY).

This sequence belongs to the ORM family. Ceramide-sensitive subunit of the serine palmitoyltransferase (SPT) complex, which is also composed of SPTLC1, SPTLC2/3 and SPTSSA/B. As to expression, widely expressed. Expressed in adult and fetal heart, brain, lung, liver, skeletal muscle and kidney. Expressed in adult pancreas and placenta and in fetal spleen abd thymus. Expressed at intermediate level in pancreas, placenta and brain but low in skeletal muscle and lung.

It is found in the endoplasmic reticulum membrane. Plays an essential role in the homeostatic regulation of sphingolipid de novo biosynthesis by modulating the activity of the serine palmitoyltransferase (SPT) in response to ceramide levels. When complexed to SPT, the binding of ceramides to its N-terminus stabilizes a conformation that block SPT substrate entry, hence preventing SPT catalytic activity. Through this mechanism, maintains ceramide levels at sufficient concentrations for the production of complex sphingolipids, but which prevents the accumulation of ceramides to levels that trigger apoptosis. The polypeptide is ORM1-like protein 1 (ORMDL1) (Homo sapiens (Human)).